A 1006-amino-acid polypeptide reads, in one-letter code: Phosphatidylinositol-3,5-bisphosphate 3-phosphatase MTMR3 (1006 aa).

Residues 1–10 are compositionally biased toward low complexity; sequence MTVTSSAAID. Positions 1–29 are disordered; sequence MTVTSSAAIDIGGGGGGRRSDRLDSDRTS. Residues 18–29 are compositionally biased toward basic and acidic residues; it reads RRSDRLDSDRTS. The 407-residue stretch at 224-630 folds into the Myotubularin phosphatase domain; the sequence is AWKFSEAVDE…INLRVWHEVF (407 aa). A 1,2-diacyl-sn-glycero-3-phospho-(1D-myo-inositol-3,5-bisphosphate) contacts are provided by asparagine 377, asparagine 402, and isoleucine 403. A 1,2-diacyl-sn-glycero-3-phospho-(1D-myo-inositol-3-phosphate) contacts are provided by asparagine 377, asparagine 402, and isoleucine 403. Cysteine 463 acts as the Phosphocysteine intermediate in catalysis. Serine 464, aspartate 465, glycine 466, tryptophan 467, aspartate 468, arginine 469, lysine 505, and arginine 509 together coordinate a 1,2-diacyl-sn-glycero-3-phospho-(1D-myo-inositol-3,5-bisphosphate). A 1,2-diacyl-sn-glycero-3-phospho-(1D-myo-inositol-3-phosphate)-binding residues include serine 464, aspartate 465, glycine 466, tryptophan 467, aspartate 468, and arginine 469. Arginine 509 provides a ligand contact to a 1,2-diacyl-sn-glycero-3-phospho-(1D-myo-inositol-3-phosphate). The tract at residues 641 to 705 is disordered; sequence FSPKEERPLS…PSDNTNSLPM (65 aa). Positions 651 to 705 are enriched in polar residues; it reads GCTTPMNTSTSTNLVKSKSSESINSLNVDGSAKESSQQHPTCSTTPSDNTNSLPM. The FYVE-type zinc-finger motif lies at 818–883; the sequence is EGESGHCAYC…ACDSCYDSMH (66 aa). Residues cysteine 824, cysteine 827, cysteine 845, cysteine 848, cysteine 853, cysteine 856, cysteine 875, and cysteine 878 each coordinate Zn(2+). The disordered stretch occupies residues 886-1006; it reads DLKLSSSSTT…DVLDVNEQPL (121 aa). 2 stretches are compositionally biased toward low complexity: residues 890 to 901 and 913 to 926; these read SSSSTTTTSSST and DNNS…VSEN. Basic and acidic residues-rich tracts occupy residues 933–954 and 976–985; these read VEEK…ETKC and HSRDPLKSID.

The protein belongs to the protein-tyrosine phosphatase family. Non-receptor class myotubularin subfamily. In terms of tissue distribution, expressed in the body wall muscle and in eggs. Expressed in head neurons. Expressed in the intestine. Expressed in pharyngeal cells, vulval muscle cells and cells of the tail region.

Its subcellular location is the cytoplasm. The protein resides in the membrane. It catalyses the reaction a 1,2-diacyl-sn-glycero-3-phospho-(1D-myo-inositol-3,5-bisphosphate) + H2O = a 1,2-diacyl-sn-glycero-3-phospho-(1D-myo-inositol-5-phosphate) + phosphate. The enzyme catalyses a 1,2-diacyl-sn-glycero-3-phospho-(1D-myo-inositol-3-phosphate) + H2O = a 1,2-diacyl-sn-glycero-3-phospho-(1D-myo-inositol) + phosphate. It carries out the reaction 1,2-dihexadecanoyl-sn-glycero-3-phospho-(1D-myo-inositol-3-phosphate) + H2O = 1,2-dihexadecanoyl-sn-glycero-3-phospho-(1D-myo-inositol) + phosphate. The catalysed reaction is 1,2-dihexadecanoyl-sn-glycero-3-phospho-(1D-myo-inositol-3,5-phosphate) + H2O = 1,2-dihexadecanoyl-sn-glycero-3-phospho-(1D-myo-inositol-5-phosphate) + phosphate. It catalyses the reaction 1,2-dioctanoyl-sn-glycero-3-phospho-(1-D-myo-inositol-3-phosphate) + H2O = 1,2-dioctanoyl-sn-glycero-3-phospho-(1D-myo-inositol) + phosphate. Inhibited by sodium vanadate and peroxide. Functionally, preferentially dephosphorylates phosphatidylinositol 3-phosphate (PI3P), and has some activity towards phosphatidylinositol 3,5-bisphosphate (PI35P). Positively regulates autophagy and is recruited to autophagosomes by PI3P where it catalyzes PI3P turnover to promote autophagosome maturation. Thought to have a role in maintenance of muscle function. Involved in locomotion and lifespan determination. The protein is Phosphatidylinositol-3,5-bisphosphate 3-phosphatase MTMR3 of Caenorhabditis elegans.